Reading from the N-terminus, the 611-residue chain is Polyphenol oxidase 4 (611 aa).

H57, H82, H91, H251, H255, and H283 together coordinate Cu cation. The segment at residues 80–82 (CTH) is a cross-link (2'-(S-cysteinyl)-histidine (Cys-His)). A substrate-binding site is contributed by H255. A propeptide spans 380-611 (IKKSEGGKNP…GGLGALGRIF (232 aa)) (removed in mature form).

It belongs to the tyrosinase family. In terms of assembly, heterotetramer. The cofactor is Cu(2+). In terms of processing, the C-ter is probably cleaved after Gly-379 since the mature active protein is smaller than the protein encoded by the gene.

The catalysed reaction is 2 L-dopa + O2 = 2 L-dopaquinone + 2 H2O. It catalyses the reaction L-tyrosine + O2 = L-dopaquinone + H2O. Copper-containing oxidase that catalyzes both the o-hydroxylation of monophenols and the subsequent oxidation of the resulting o-diphenols into reactive o-quinones, which evolve spontaneously to produce intermediates, which associate in dark brown pigments. Involved in the initial step of melanin synthesis. Melanins constitute a mechanism of defense and resistance to stress such as UV radiations, free radicals, gamma rays, dehydratation and extreme temperatures, and contribute to the fungal cell-wall resistance against hydrolytic enzymes in avoiding cellular lysis. Fungal pigments are also involved in the formation and stability of spores. This is Polyphenol oxidase 4 (PPO4) from Agaricus bisporus (White button mushroom).